We begin with the raw amino-acid sequence, 348 residues long: Histidinol-phosphate aminotransferase (348 aa).

N6-(pyridoxal phosphate)lysine is present on lysine 210.

It belongs to the class-II pyridoxal-phosphate-dependent aminotransferase family. Histidinol-phosphate aminotransferase subfamily. In terms of assembly, homodimer. It depends on pyridoxal 5'-phosphate as a cofactor.

The catalysed reaction is L-histidinol phosphate + 2-oxoglutarate = 3-(imidazol-4-yl)-2-oxopropyl phosphate + L-glutamate. It participates in amino-acid biosynthesis; L-histidine biosynthesis; L-histidine from 5-phospho-alpha-D-ribose 1-diphosphate: step 7/9. The protein is Histidinol-phosphate aminotransferase of Cytophaga hutchinsonii (strain ATCC 33406 / DSM 1761 / CIP 103989 / NBRC 15051 / NCIMB 9469 / D465).